The chain runs to 185 residues: Ribosome-recycling factor (185 aa).

The protein belongs to the RRF family.

It is found in the cytoplasm. Responsible for the release of ribosomes from messenger RNA at the termination of protein biosynthesis. May increase the efficiency of translation by recycling ribosomes from one round of translation to another. The polypeptide is Ribosome-recycling factor (Beutenbergia cavernae (strain ATCC BAA-8 / DSM 12333 / CCUG 43141 / JCM 11478 / NBRC 16432 / NCIMB 13614 / HKI 0122)).